Here is a 398-residue protein sequence, read N- to C-terminus: MGTCDIVTEANISSGPESNTTGITAFSMPSWQLALWATAYLALVLVAVTGNAIVIWIILAHRRMRTVTNYFIVNLALADLCMAAFNAAFNFVYASHNIWYFGRAFCYFQNLFPITAMFVSIYSMTAIAADRYMAIVHPFQPRLSAPSTKAVIAGIWLVALALASPQCFYSTVTMDQGATKCVVAWPEDSGGKTLLLYHLVVIALIYFLPLAVMFVAYSVIGLTLWRRAVPGHQAHGANLRHLQAMKKFVKTMVLVVLTFAICWLPYHLYFILGSFQEDIYCHKFIQQVYLALFWLAMSSTMYNPIIYCCLNHRFRSGFRLAFRCCPWVTPTKEDKLELTPTTSLSTRVNRCHTKETLFMAGDTAPSEATSGEAGRPQDGSGLWFGYGLLAPTKTHVEI.

Topologically, residues 1–32 (MGTCDIVTEANISSGPESNTTGITAFSMPSWQ) are extracellular. Residues N11 and N19 are each glycosylated (N-linked (GlcNAc...) asparagine). The helical transmembrane segment at 33–56 (LALWATAYLALVLVAVTGNAIVIW) threads the bilayer. The Cytoplasmic segment spans residues 57–69 (IILAHRRMRTVTN). Residues 70-90 (YFIVNLALADLCMAAFNAAFN) traverse the membrane as a helical segment. Topologically, residues 91-107 (FVYASHNIWYFGRAFCY) are extracellular. A disulfide bridge links C106 with C181. The chain crosses the membrane as a helical span at residues 108–129 (FQNLFPITAMFVSIYSMTAIAA). Topologically, residues 130 to 149 (DRYMAIVHPFQPRLSAPSTK) are cytoplasmic. A helical membrane pass occupies residues 150–170 (AVIAGIWLVALALASPQCFYS). The Extracellular portion of the chain corresponds to 171–196 (TVTMDQGATKCVVAWPEDSGGKTLLL). The helical transmembrane segment at 197 to 218 (YHLVVIALIYFLPLAVMFVAYS) threads the bilayer. The Cytoplasmic portion of the chain corresponds to 219-251 (VIGLTLWRRAVPGHQAHGANLRHLQAMKKFVKT). The helical transmembrane segment at 252–272 (MVLVVLTFAICWLPYHLYFIL) threads the bilayer. The Extracellular segment spans residues 273 to 290 (GSFQEDIYCHKFIQQVYL). The helical transmembrane segment at 291–310 (ALFWLAMSSTMYNPIIYCCL) threads the bilayer. Residues 311-398 (NHRFRSGFRL…LAPTKTHVEI (88 aa)) are Cytoplasmic-facing. C324 is lipidated: S-palmitoyl cysteine.

Belongs to the G-protein coupled receptor 1 family.

It is found in the cell membrane. This is a receptor for the tachykinin neuropeptide substance K (neurokinin A). It is associated with G proteins that activate a phosphatidylinositol-calcium second messenger system. The rank order of affinity of this receptor to tachykinins is: substance K &gt; neuromedin-K &gt; substance P. The polypeptide is Substance-K receptor (TACR2) (Homo sapiens (Human)).